The following is a 132-amino-acid chain: Aspartate 1-decarboxylase (132 aa).

Ser-25 serves as the catalytic Schiff-base intermediate with substrate; via pyruvic acid. Ser-25 is subject to Pyruvic acid (Ser). Thr-57 is a binding site for substrate. Tyr-58 functions as the Proton donor in the catalytic mechanism. 73 to 75 (GAA) contacts substrate.

This sequence belongs to the PanD family. Heterooctamer of four alpha and four beta subunits. The cofactor is pyruvate. Is synthesized initially as an inactive proenzyme, which is activated by self-cleavage at a specific serine bond to produce a beta-subunit with a hydroxyl group at its C-terminus and an alpha-subunit with a pyruvoyl group at its N-terminus.

Its subcellular location is the cytoplasm. It catalyses the reaction L-aspartate + H(+) = beta-alanine + CO2. It functions in the pathway cofactor biosynthesis; (R)-pantothenate biosynthesis; beta-alanine from L-aspartate: step 1/1. Functionally, catalyzes the pyruvoyl-dependent decarboxylation of aspartate to produce beta-alanine. The chain is Aspartate 1-decarboxylase from Pelotomaculum thermopropionicum (strain DSM 13744 / JCM 10971 / SI).